The chain runs to 92 residues: Putative septation protein SpoVG (92 aa).

It belongs to the SpoVG family.

In terms of biological role, could be involved in septation. This Clostridioides difficile (strain 630) (Peptoclostridium difficile) protein is Putative septation protein SpoVG.